We begin with the raw amino-acid sequence, 153 residues long: SsrA-binding protein (153 aa).

Residues 133–143 (ADLKERDDKRQ) are compositionally biased toward basic and acidic residues. The disordered stretch occupies residues 133-153 (ADLKERDDKRQMQQALKQQQY). Residues 144–153 (MQQALKQQQY) show a composition bias toward low complexity.

This sequence belongs to the SmpB family.

The protein resides in the cytoplasm. Its function is as follows. Required for rescue of stalled ribosomes mediated by trans-translation. Binds to transfer-messenger RNA (tmRNA), required for stable association of tmRNA with ribosomes. tmRNA and SmpB together mimic tRNA shape, replacing the anticodon stem-loop with SmpB. tmRNA is encoded by the ssrA gene; the 2 termini fold to resemble tRNA(Ala) and it encodes a 'tag peptide', a short internal open reading frame. During trans-translation Ala-aminoacylated tmRNA acts like a tRNA, entering the A-site of stalled ribosomes, displacing the stalled mRNA. The ribosome then switches to translate the ORF on the tmRNA; the nascent peptide is terminated with the 'tag peptide' encoded by the tmRNA and targeted for degradation. The ribosome is freed to recommence translation, which seems to be the essential function of trans-translation. This chain is SsrA-binding protein, found in Protochlamydia amoebophila (strain UWE25).